A 446-amino-acid polypeptide reads, in one-letter code: Neuropeptide Y receptor type 5 (446 aa).

The Extracellular segment spans residues 1–42 (MDLELQDFYNKTLATENNTAATRNSDFPVWDDYKSSVDDLQY). N-linked (GlcNAc...) asparagine glycans are attached at residues Asn-10 and Asn-17. Residues 43–63 (FLIGLYTFVSLLGFMGNLLIL) traverse the membrane as a helical segment. Topologically, residues 64–77 (MALMRKRNQKTMVN) are cytoplasmic. The helical transmembrane segment at 78–98 (FLIGNLAFSDILVVLFCSPFT) threads the bilayer. The Extracellular segment spans residues 99-117 (LTSVLLDQWMFGKVMCHIM). Residues Cys-114 and Cys-198 are joined by a disulfide bond. The helical transmembrane segment at 118–138 (PFLQCVSVLVSTLILISIAIV) threads the bilayer. The Cytoplasmic segment spans residues 139–156 (RYHMIKHPISNNLTANHG). Residues 157-177 (YFLIATVWTLGFAICSPLPVF) traverse the membrane as a helical segment. The Extracellular portion of the chain corresponds to 178–208 (HSLVELQETFDSALLSSRYLCVESWPSDSYR). A helical membrane pass occupies residues 209–229 (IAFTISLLLVQYILPLVCLTV). The Cytoplasmic segment spans residues 230–369 (SHTSVCRSIS…KKRSRSVFYR (140 aa)). Residues 370–390 (LTILILVFAVSWMPLHLFHVV) form a helical membrane-spanning segment. Residues 391-407 (TDFNDNLISNRHFKLVY) lie on the Extracellular side of the membrane. The chain crosses the membrane as a helical span at residues 408 to 428 (CICHLLGMMSCCLNPILYGFL). Over 429–446 (NNGIKADLISLIQCLHMS) the chain is Cytoplasmic. Cys-442 carries S-palmitoyl cysteine lipidation.

It belongs to the G-protein coupled receptor 1 family.

It is found in the cell membrane. In terms of biological role, receptor for neuropeptide Y and peptide YY. The activity of this receptor is mediated by G proteins that inhibit adenylate cyclase activity. Seems to be associated with food intake. Could be involved in feeding disorders. The chain is Neuropeptide Y receptor type 5 (NPY5R) from Canis lupus familiaris (Dog).